Reading from the N-terminus, the 351-residue chain is MIEKLFKQNLQKFVPYTVPKLDYEIKLDANESFLKLDDYMMGKILNKIKDVEFNRYPDAGAEKVCRAYSKYVGINRENIMAGNGSDELIQIIIAALVDKNENIMTVEPDFSMYGNYSEIGGGKALIFQLDEEFNLDVDKLIESANVEKVKVLFLSNPNNPTGKVLKREQIFKILNGCDCAVVIDEAYVEFHEESIVDSIYEYENLIVLRTCSKAMASAAIRLGFLITNSFMLNEIKKAKPPFNVSSVTQAIGEAVLEETEYIKKSLENIKNERSFLIDKLSAFKEIKLYPTCANFILIKFKDAEFVYKYLLENKIVVRNYKQGRLKDFLRITVGSREENEAVINNLSKILK.

Residue Lys-213 is modified to N6-(pyridoxal phosphate)lysine.

Belongs to the class-II pyridoxal-phosphate-dependent aminotransferase family. Histidinol-phosphate aminotransferase subfamily. As to quaternary structure, homodimer. The cofactor is pyridoxal 5'-phosphate.

It carries out the reaction L-histidinol phosphate + 2-oxoglutarate = 3-(imidazol-4-yl)-2-oxopropyl phosphate + L-glutamate. The protein operates within amino-acid biosynthesis; L-histidine biosynthesis; L-histidine from 5-phospho-alpha-D-ribose 1-diphosphate: step 7/9. The chain is Histidinol-phosphate aminotransferase from Clostridium kluyveri (strain NBRC 12016).